The sequence spans 331 residues: UDP-glucose 4-epimerase (331 aa).

NAD(+) contacts are provided by residues 11–12, 31–36, 51–52, 73–77, N92, T117, Y141, K145, and F169; these read YI, DNLITG, DI, and FAAFS. T117 and Y141 together coordinate substrate. Residue Y141 is the Proton acceptor of the active site. Residues N170, 189 to 190, 206 to 208, R221, and 282 to 285 each bind substrate; these read HI, QIY, and RAGD.

It belongs to the NAD(P)-dependent epimerase/dehydratase family. As to quaternary structure, homodimer. Requires NAD(+) as cofactor.

The enzyme catalyses UDP-alpha-D-glucose = UDP-alpha-D-galactose. Its pathway is carbohydrate metabolism; galactose metabolism. The chain is UDP-glucose 4-epimerase (galE) from Lacticaseibacillus casei (Lactobacillus casei).